Consider the following 259-residue polypeptide: Electron transfer flavoprotein subunit beta (259 aa).

Belongs to the ETF beta-subunit/FixA family. Heterodimer of an alpha and a beta subunit. FAD serves as cofactor. AMP is required as a cofactor.

Functionally, the electron transfer flavoprotein serves as a specific electron acceptor for other dehydrogenases. It transfers the electrons to the main respiratory chain via ETF-ubiquinone oxidoreductase (ETF dehydrogenase). This chain is Electron transfer flavoprotein subunit beta (etfB), found in Clostridium acetobutylicum (strain ATCC 824 / DSM 792 / JCM 1419 / IAM 19013 / LMG 5710 / NBRC 13948 / NRRL B-527 / VKM B-1787 / 2291 / W).